Here is a 145-residue protein sequence, read N- to C-terminus: Deoxyuridine 5'-triphosphate nucleotidohydrolase (145 aa).

Substrate contacts are provided by residues arginine 63–glycine 65, asparagine 76, and threonine 80–aspartate 82.

This sequence belongs to the dUTPase family. Mg(2+) is required as a cofactor.

The catalysed reaction is dUTP + H2O = dUMP + diphosphate + H(+). It participates in pyrimidine metabolism; dUMP biosynthesis; dUMP from dCTP (dUTP route): step 2/2. Its function is as follows. This enzyme is involved in nucleotide metabolism: it produces dUMP, the immediate precursor of thymidine nucleotides and it decreases the intracellular concentration of dUTP so that uracil cannot be incorporated into DNA. The chain is Deoxyuridine 5'-triphosphate nucleotidohydrolase from Chlamydia pneumoniae (Chlamydophila pneumoniae).